A 218-amino-acid chain; its full sequence is Large ribosomal subunit protein uL3 (218 aa).

Positions 126 to 170 are disordered; that stretch reads HGFSRGPMSHGSKNHREPGSTGAGTTPGRIYPGKRMAGRYGGKKR.

This sequence belongs to the universal ribosomal protein uL3 family. Part of the 50S ribosomal subunit. Forms a cluster with proteins L14 and L19.

Functionally, one of the primary rRNA binding proteins, it binds directly near the 3'-end of the 23S rRNA, where it nucleates assembly of the 50S subunit. This is Large ribosomal subunit protein uL3 from Prochlorococcus marinus (strain MIT 9313).